Consider the following 433-residue polypeptide: Monodehydroascorbate reductase (433 aa).

FAD contacts are provided by residues 12–15, glutamate 39, arginine 46, lysine 51, isoleucine 94, and 145–146; these read GGVS and RE. Residues 170–176, glutamate 194, arginine 200, and glycine 259 contribute to the NAD(+) site; that span reads GGYIGLE. Residue 172–176 participates in NADP(+) binding; the sequence is YIGLE. NADP(+) is bound by residues arginine 200 and glycine 259. Aspartate 296 provides a ligand contact to FAD. 312-313 contacts NAD(+); the sequence is EH. Residue 312–313 participates in NADP(+) binding; that stretch reads EH. Residue valine 314 coordinates FAD. Arginine 318 is a binding site for L-ascorbate. An FAD-binding site is contributed by tyrosine 347. NAD(+) is bound at residue tyrosine 347. Tyrosine 347 lines the NADP(+) pocket. Arginine 349 is an L-ascorbate binding site.

This sequence belongs to the FAD-dependent oxidoreductase family. Requires FAD as cofactor. In terms of tissue distribution, expressed at relatively low levels in all tissues examined.

It localises to the cytoplasm. The enzyme catalyses 2 monodehydro-L-ascorbate radical + NADH + H(+) = 2 L-ascorbate + NAD(+). In terms of biological role, catalyzes the conversion of monodehydroascorbate to ascorbate, oxidizing NADH in the process. This Pisum sativum (Garden pea) protein is Monodehydroascorbate reductase.